The sequence spans 75 residues: uncharacterized protein (75 aa).

A signal peptide spans 1–19 (MQCVCLCVFVLLLAGCVTS).

Nacreous layer of shell (at protein level).

It is found in the secreted. This is an uncharacterized protein from Margaritifera margaritifera (Freshwater pearl mussel).